We begin with the raw amino-acid sequence, 943 residues long: Receptor-like protein 35 (943 aa).

Residues 1–31 form the signal peptide; it reads MTGSWNPTSIIIPVTLSFLLSFIHNFADVVA. The Extracellular segment spans residues 32–897; sequence APTRHLCLPE…EEEDEEEISW (866 aa). Asn67, Asn82, Asn118, Asn147, Asn171, Asn195, Asn219, and Asn222 each carry an N-linked (GlcNAc...) asparagine glycan. LRR repeat units lie at residues 124-148, 150-171, 172-196, 198-220, 222-244, 245-267, 268-292, 293-317, 319-340, 341-364, and 366-389; these read LQNL…IGNL, HLTS…SIEN, LSRL…IGNL, HLTS…IGNL, NLTF…IGNL, ARLT…SFGN, LNQL…LLNL, TRLS…SLLS, LMDF…LFNI, PPLI…NISS, and SNLQ…LSRF. Asn291 and Asn312 each carry an N-linked (GlcNAc...) asparagine glycan. 2 N-linked (GlcNAc...) asparagine glycosylation sites follow: Asn354 and Asn361. The stretch at 390 to 414 is one LRR 12; degenerate repeat; the sequence is VNLTLFDLSHLNTQCRPVDFSIFSH. The N-linked (GlcNAc...) asparagine glycan is linked to Asn391. LRR repeat units follow at residues 415–439, 440–463, 467–490, 491–514, 515–537, 544–568, 569–592, 593–617, 619–639, 640–665, 667–685, 686–709, 753–777, 778–801, 802–825, and 827–850; these read LKSL…ILPY, FKTL…SVSS, SQSI…LRTQ, HELG…LWTL, PNLF…SKKH, KPSM…ICGL, RSLN…MEKL, KSTL…IFES, RSLD…LIRF, SNLE…SLSK, QVLV…EATF, PELR…YFVK, LTIY…IGLL, KELL…MGNL, TALE…LGDL, and FLAY…QFRR. A glycan (N-linked (GlcNAc...) asparagine) is linked at Asn457. Asn521, Asn524, Asn556, Asn582, and Asn605 each carry an N-linked (GlcNAc...) asparagine glycan. Asn653 carries an N-linked (GlcNAc...) asparagine glycan. Residue Asn699 is glycosylated (N-linked (GlcNAc...) asparagine). Asn784 and Asn800 each carry an N-linked (GlcNAc...) asparagine glycan. N-linked (GlcNAc...) asparagine glycans are attached at residues Asn832, Asn852, and Asn882. A helical membrane pass occupies residues 898 to 918; that stretch reads IAAAIGFIPGIVFGLTIGYIL. Residues 919–943 are Cytoplasmic-facing; the sequence is VSYKPEWFMNPFGRNNRRRRNTTTH.

It belongs to the RLP family.

Its subcellular location is the cell membrane. The protein is Receptor-like protein 35 of Arabidopsis thaliana (Mouse-ear cress).